The chain runs to 332 residues: Ketol-acid reductoisomerase (NADP(+)) (332 aa).

Residues 1–182 (MATIYRDKDA…GGTRAGVLET (182 aa)) enclose the KARI N-terminal Rossmann domain. NADP(+) contacts are provided by residues 25–28 (YGNQ), Lys49, Ser51, and 83–86 (DELQ). The active site involves His108. Gly134 lines the NADP(+) pocket. One can recognise a KARI C-terminal knotted domain in the interval 183–328 (TFAEETETDL…AELRAMMPWL (146 aa)). Residues Asp191, Glu195, Glu227, and Glu231 each coordinate Mg(2+). Ser252 is a binding site for substrate.

It belongs to the ketol-acid reductoisomerase family. Mg(2+) is required as a cofactor.

The enzyme catalyses (2R)-2,3-dihydroxy-3-methylbutanoate + NADP(+) = (2S)-2-acetolactate + NADPH + H(+). It catalyses the reaction (2R,3R)-2,3-dihydroxy-3-methylpentanoate + NADP(+) = (S)-2-ethyl-2-hydroxy-3-oxobutanoate + NADPH + H(+). It participates in amino-acid biosynthesis; L-isoleucine biosynthesis; L-isoleucine from 2-oxobutanoate: step 2/4. Its pathway is amino-acid biosynthesis; L-valine biosynthesis; L-valine from pyruvate: step 2/4. In terms of biological role, involved in the biosynthesis of branched-chain amino acids (BCAA). Catalyzes an alkyl-migration followed by a ketol-acid reduction of (S)-2-acetolactate (S2AL) to yield (R)-2,3-dihydroxy-isovalerate. In the isomerase reaction, S2AL is rearranged via a Mg-dependent methyl migration to produce 3-hydroxy-3-methyl-2-ketobutyrate (HMKB). In the reductase reaction, this 2-ketoacid undergoes a metal-dependent reduction by NADPH to yield (R)-2,3-dihydroxy-isovalerate. In Methanothrix thermoacetophila (strain DSM 6194 / JCM 14653 / NBRC 101360 / PT) (Methanosaeta thermophila), this protein is Ketol-acid reductoisomerase (NADP(+)).